A 239-amino-acid polypeptide reads, in one-letter code: Zwei Ig domain protein zig-7 (239 aa).

The N-terminal stretch at 1 to 21 (MKLINCISIALLCTLVDFSSA) is a signal peptide. N-linked (GlcNAc...) asparagine glycosylation occurs at Asn-43. Residues 145 to 211 (PHVIGAERRG…TEDHIGKYRC (67 aa)) enclose the Ig-like C2-type domain. An intrachain disulfide couples Cys-164 to Cys-211.

In terms of tissue distribution, expressed in body wall muscles.

The protein localises to the secreted. Probably not involved in maintaining the position of ASI and ASH head neuron cell bodies and ventral nerve cord axons of PVQ, PVP, RMEV, AVK and HSN neurons. The protein is Zwei Ig domain protein zig-7 of Caenorhabditis elegans.